A 173-amino-acid chain; its full sequence is MILTGKEIQKRIGNDIVITPYSEKQLNPNSYNLRLHEELLVYTELPLDMKKPNPAEKLVIPESGLLLKPGILYLGRTLESTETHNLVPMLEGRSSIGRLGMLVHVTAGFGDVGFKGFWTLEISVIQPLIVYPGVEVCQIFYHTLEGQITEYTSGKYQANRGIQTSMLYKDFEK.

DCTP contacts are provided by residues 93–98 (RSSIGR), Asp-111, 119–121 (TLE), and Gln-138. Glu-121 acts as the Proton donor/acceptor in catalysis.

Belongs to the dCTP deaminase family. In terms of assembly, homotrimer.

The catalysed reaction is dCTP + 2 H2O = dUMP + NH4(+) + diphosphate. The protein operates within pyrimidine metabolism; dUMP biosynthesis; dUMP from dCTP: step 1/1. Bifunctional enzyme that catalyzes both the deamination of dCTP to dUTP and the hydrolysis of dUTP to dUMP without releasing the toxic dUTP intermediate. This chain is dCTP deaminase, dUMP-forming, found in Leptospira interrogans serogroup Icterohaemorrhagiae serovar copenhageni (strain Fiocruz L1-130).